The primary structure comprises 100 residues: Urease subunit gamma (100 aa).

Belongs to the urease gamma subunit family. Heterotrimer of UreA (gamma), UreB (beta) and UreC (alpha) subunits. Three heterotrimers associate to form the active enzyme.

Its subcellular location is the cytoplasm. The catalysed reaction is urea + 2 H2O + H(+) = hydrogencarbonate + 2 NH4(+). The protein operates within nitrogen metabolism; urea degradation; CO(2) and NH(3) from urea (urease route): step 1/1. The protein is Urease subunit gamma of Halalkalibacterium halodurans (strain ATCC BAA-125 / DSM 18197 / FERM 7344 / JCM 9153 / C-125) (Bacillus halodurans).